The sequence spans 312 residues: Zygote arrest protein 1.L (312 aa).

Disordered stretches follow at residues 79–133 (RDVG…VRFP) and 150–205 (FQDK…DQTR). 2 stretches are compositionally biased toward polar residues: residues 86-95 (NPRQDASVQC) and 113-128 (PQQS…SPTK). Residues 152–196 (DKGENLSEKTEALRSEGSRGEGGRPEGKQEDGEIKEQTKMDKADQ) are compositionally biased toward basic and acidic residues. The 3CxxC-type zinc finger occupies 214-297 (KYGYYHCKDC…RQDLCGRCKG (84 aa)).

This sequence belongs to the ZAR1 family. As to expression, ovary.

It is found in the cytoplasm. It localises to the cytoplasmic ribonucleoprotein granule. Functionally, mRNA-binding protein required for maternal mRNA storage, translation and degradation during oocyte maturation. Probably promotes formation of some phase-separated membraneless compartment that stores maternal mRNAs in oocytes: acts by undergoing liquid-liquid phase separation upon binding to maternal mRNAs. Binds to the 3'-UTR of maternal mRNAs in immature oocytes, inhibiting their translation. This is Zygote arrest protein 1.L from Xenopus laevis (African clawed frog).